The primary structure comprises 248 residues: 2,3-bisphosphoglycerate-dependent phosphoglycerate mutase (248 aa).

Substrate-binding positions include 10-17 (RHGQSQWN), 23-24 (TG), Arg-62, 89-92 (ERHY), Lys-100, 116-117 (RR), and 183-184 (GN). The active-site Tele-phosphohistidine intermediate is the His-11. The active-site Proton donor/acceptor is the Glu-89.

This sequence belongs to the phosphoglycerate mutase family. BPG-dependent PGAM subfamily.

It catalyses the reaction (2R)-2-phosphoglycerate = (2R)-3-phosphoglycerate. The protein operates within carbohydrate degradation; glycolysis; pyruvate from D-glyceraldehyde 3-phosphate: step 3/5. Functionally, catalyzes the interconversion of 2-phosphoglycerate and 3-phosphoglycerate. The protein is 2,3-bisphosphoglycerate-dependent phosphoglycerate mutase of Corynebacterium kroppenstedtii (strain DSM 44385 / JCM 11950 / CIP 105744 / CCUG 35717).